The sequence spans 129 residues: Small ribosomal subunit protein uS11 (129 aa).

Belongs to the universal ribosomal protein uS11 family. Part of the 30S ribosomal subunit. Interacts with proteins S7 and S18. Binds to IF-3.

Functionally, located on the platform of the 30S subunit, it bridges several disparate RNA helices of the 16S rRNA. Forms part of the Shine-Dalgarno cleft in the 70S ribosome. This is Small ribosomal subunit protein uS11 from Hamiltonella defensa subsp. Acyrthosiphon pisum (strain 5AT).